Consider the following 302-residue polypeptide: CRISPR-associated endonuclease Cas1 1 (302 aa).

3 residues coordinate Mn(2+): Glu-159, His-219, and Glu-234.

It belongs to the CRISPR-associated endonuclease Cas1 family. Homodimer, forms a heterotetramer with a Cas2 homodimer. The cofactor is Mg(2+). It depends on Mn(2+) as a cofactor.

In terms of biological role, CRISPR (clustered regularly interspaced short palindromic repeat), is an adaptive immune system that provides protection against mobile genetic elements (viruses, transposable elements and conjugative plasmids). CRISPR clusters contain spacers, sequences complementary to antecedent mobile elements, and target invading nucleic acids. CRISPR clusters are transcribed and processed into CRISPR RNA (crRNA). Acts as a dsDNA endonuclease. Involved in the integration of spacer DNA into the CRISPR cassette. The protein is CRISPR-associated endonuclease Cas1 1 of Pyrobaculum aerophilum (strain ATCC 51768 / DSM 7523 / JCM 9630 / CIP 104966 / NBRC 100827 / IM2).